Reading from the N-terminus, the 336-residue chain is Alpha-N-acetylgalactosaminide alpha-2,6-sialyltransferase 5 (336 aa).

Topologically, residues 1-8 are cytoplasmic; the sequence is MKTLMRHG. Residues 9-29 form a helical; Signal-anchor for type II membrane protein membrane-spanning segment; sequence LAVCLVLTTMCTSLLLVYSSL. Over 30-336 the chain is Lumenal; it reads GSQKERPPQQ…VNHAEGKPVF (307 aa). The segment at 34–76 is disordered; the sequence is ERPPQQQQQQQQQQQQAATATGSTQLVESSPQPRRTAPAGPRQ. Residues 38–49 are compositionally biased toward low complexity; sequence QQQQQQQQQQQQ. Polar residues predominate over residues 50 to 66; it reads AATATGSTQLVESSPQP. An intrachain disulfide couples Cys96 to Cys245. Asn137 and Asn161 each carry an N-linked (GlcNAc...) asparagine glycan.

It belongs to the glycosyltransferase 29 family. High expression in forebrain and to a lesser extent in cerebellum. No expression in salivary gland, intestine, liver, kidney, heart, lung, thymus and spleen.

It is found in the golgi apparatus membrane. The enzyme catalyses a ganglioside GM1b (d18:1(4E)) + CMP-N-acetyl-beta-neuraminate = a ganglioside GD1alpha (d18:1(4E)) + CMP + H(+). It catalyses the reaction N-acetyl-alpha-neuraminosyl-(2-&gt;3)-beta-D-galactosyl-(1-&gt;3)-N-acetyl-beta-D-glucosaminyl-(1-&gt;3)-beta-D-galactosyl-(1-&gt;4)-beta-D-glucosyl-(1&lt;-&gt;1')-N-acyl-sphing-4-enine + CMP-N-acetyl-beta-neuraminate = N-acetyl-alpha-neuraminosyl-(2-&gt;3)-beta-D-galactosyl-(1-&gt;3)-[N-acetyl-alpha-neuraminosyl-(2-&gt;6)]-N-acetyl-beta-D-glucosaminyl-(1-&gt;3)-beta-D-galactosyl-(1-&gt;4)-beta-D-glucosyl-(1&lt;-&gt;1')-N-acyl-sphing-4-enine + CMP + H(+). It functions in the pathway glycolipid biosynthesis. In terms of biological role, predominantly catalyzes the biosynthesis of ganglioside GD1alpha from GM1b in the brain, by transferring the sialyl group (N-acetyl-alpha-neuraminyl or NeuAc) from CMP-NeuAc to the GalNAc residue on the NeuAc-alpha-2,3-Gal-beta-1,3-GalNAc sequence of GM1b. GD1alpha is a critical molecule in the communication and interaction between neuronal cells and their supportive cells, particularly in brain tissues, and functions as an adhesion molecule in the process of metastasis. Also shows activity towards sialyl Lc4Cer (N-acetyl-alpha-neuraminosyl-(2-&gt;3)-beta-D-galactosyl-(1-&gt;3)-N-acetyl-beta-D-glucosaminyl-(1-&gt;3)-beta-D-galactosyl-(1-&gt;4)-beta-D-glucosyl-(1&lt;-&gt;1')-N-acyl-sphing-4-enine) generating disialyl Lc4Cer, which can lead to the synthesis of disialyl Lewis a (Le(a)), suggested to be a cancer-associated antigen. This Mus musculus (Mouse) protein is Alpha-N-acetylgalactosaminide alpha-2,6-sialyltransferase 5 (St6galnac5).